The following is a 448-amino-acid chain: Fibulin-5 (448 aa).

A signal peptide spans M1–A23. The EGF-like 1; calcium-binding domain occupies D42 to N82. 17 disulfide bridges follow: C46–C59, C53–C68, C131–C144, C138–C153, C155–C166, C172–C181, C177–C190, C192–C205, C211–C221, C217–C230, C232–C245, C251–C262, C258–C271, C273–C286, C292–C305, C299–C314, and C320–C332. The Cell attachment site motif lies at R54–D56. An EGF-like 2; calcium-binding domain is found at D127–L167. Residues D168 to Q206 form the EGF-like 3; calcium-binding domain. The 40-residue stretch at D207–S246 folds into the EGF-like 4; calcium-binding domain. The segment at C245–F448 is interaction with LOXL1. The region spanning D247–Q287 is the EGF-like 5; calcium-binding domain. Residues N283 and N296 are each glycosylated (N-linked (GlcNAc...) asparagine). The region spanning D288–M333 is the EGF-like 6; calcium-binding domain.

Belongs to the fibulin family. Homodimer. Monomer, homodimerizes in presence of Ca(2+). Interacts with ELN. Interacts (via N-terminus) with the integrins ITGAV/ITGB3, ITGAV/ITGB5 and ITGA9/ITGB1. Interacts with FBN1 (via N-terminal domain). Forms a ternary complex with ELN and FBN1. Interacts with EFEMP2 with moderate affinity. Interacts with LOXL1. In terms of processing, N-glycosylated. Expressed in skin fibroblasts (at protein level). Expressed predominantly in heart, ovary, and colon but also in kidney, pancreas, testis, lung and placenta. Not detectable in brain, liver, thymus, prostate, or peripheral blood leukocytes.

It is found in the secreted. The protein localises to the extracellular space. The protein resides in the extracellular matrix. Its function is as follows. Essential for elastic fiber formation, is involved in the assembly of continuous elastin (ELN) polymer and promotes the interaction of microfibrils and ELN. Stabilizes and organizes elastic fibers in the skin, lung and vasculature. Promotes adhesion of endothelial cells through interaction of integrins and the RGD motif. Vascular ligand for integrin receptors which may play a role in vascular development and remodeling. May act as an adapter that mediates the interaction between FBN1 and ELN. The chain is Fibulin-5 (FBLN5) from Homo sapiens (Human).